The chain runs to 1039 residues: Isoleucine--tRNA ligase (1039 aa).

The 'HIGH' region motif lies at 46–56 (PYCSGAIHLGT). Residues 600–604 (KMSKS) carry the 'KMSKS' region motif. Lysine 603 contributes to the ATP binding site.

The protein belongs to the class-I aminoacyl-tRNA synthetase family. IleS type 2 subfamily. Monomer. Zn(2+) is required as a cofactor.

It is found in the cytoplasm. The catalysed reaction is tRNA(Ile) + L-isoleucine + ATP = L-isoleucyl-tRNA(Ile) + AMP + diphosphate. Catalyzes the attachment of isoleucine to tRNA(Ile). As IleRS can inadvertently accommodate and process structurally similar amino acids such as valine, to avoid such errors it has two additional distinct tRNA(Ile)-dependent editing activities. One activity is designated as 'pretransfer' editing and involves the hydrolysis of activated Val-AMP. The other activity is designated 'posttransfer' editing and involves deacylation of mischarged Val-tRNA(Ile). This is Isoleucine--tRNA ligase from Methanocaldococcus jannaschii (strain ATCC 43067 / DSM 2661 / JAL-1 / JCM 10045 / NBRC 100440) (Methanococcus jannaschii).